A 602-amino-acid chain; its full sequence is NADH-quinone oxidoreductase subunit C/D (602 aa).

An NADH dehydrogenase I subunit C region spans residues 1–192 (MVNNMTDLTA…DPFELTKAKQ (192 aa)). Positions 216–602 (DFMFLNLGPN…IDFVMSDVDR (387 aa)) are NADH dehydrogenase I subunit D.

It in the N-terminal section; belongs to the complex I 30 kDa subunit family. In the C-terminal section; belongs to the complex I 49 kDa subunit family. NDH-1 is composed of 13 different subunits. Subunits NuoB, CD, E, F, and G constitute the peripheral sector of the complex.

The protein localises to the cell inner membrane. It catalyses the reaction a quinone + NADH + 5 H(+)(in) = a quinol + NAD(+) + 4 H(+)(out). Functionally, NDH-1 shuttles electrons from NADH, via FMN and iron-sulfur (Fe-S) centers, to quinones in the respiratory chain. The immediate electron acceptor for the enzyme in this species is believed to be ubiquinone. Couples the redox reaction to proton translocation (for every two electrons transferred, four hydrogen ions are translocated across the cytoplasmic membrane), and thus conserves the redox energy in a proton gradient. The chain is NADH-quinone oxidoreductase subunit C/D from Klebsiella pneumoniae subsp. pneumoniae (strain ATCC 700721 / MGH 78578).